We begin with the raw amino-acid sequence, 165 residues long: Ribosomal RNA large subunit methyltransferase H (165 aa).

Gly-109 serves as a coordination point for S-adenosyl-L-methionine.

Belongs to the RNA methyltransferase RlmH family. In terms of assembly, homodimer.

Its subcellular location is the cytoplasm. The catalysed reaction is pseudouridine(1915) in 23S rRNA + S-adenosyl-L-methionine = N(3)-methylpseudouridine(1915) in 23S rRNA + S-adenosyl-L-homocysteine + H(+). In terms of biological role, specifically methylates the pseudouridine at position 1915 (m3Psi1915) in 23S rRNA. The protein is Ribosomal RNA large subunit methyltransferase H of Methylorubrum populi (strain ATCC BAA-705 / NCIMB 13946 / BJ001) (Methylobacterium populi).